Reading from the N-terminus, the 184-residue chain is Transcription termination/antitermination protein NusG (184 aa).

Residues 133 to 163 (EGDQVRVVSGPFADFTGTVTEINPERGKVKV) enclose the KOW domain.

Belongs to the NusG family.

In terms of biological role, participates in transcription elongation, termination and antitermination. The polypeptide is Transcription termination/antitermination protein NusG (Thermus thermophilus (strain ATCC 27634 / DSM 579 / HB8)).